A 227-amino-acid chain; its full sequence is Probable GTP-binding protein EngB (227 aa).

The EngB-type G domain maps to 13-188 (IGLEVAFAGR…AGVMGNWYEY (176 aa)). Residues 21-28 (GRSNAGKS), 48-52 (GRTQM), 67-70 (DLPG), 134-137 (TKAD), and 167-169 (FSA) contribute to the GTP site. 2 residues coordinate Mg(2+): Ser28 and Thr50.

It belongs to the TRAFAC class TrmE-Era-EngA-EngB-Septin-like GTPase superfamily. EngB GTPase family. It depends on Mg(2+) as a cofactor.

Its function is as follows. Necessary for normal cell division and for the maintenance of normal septation. The chain is Probable GTP-binding protein EngB from Psychrobacter cryohalolentis (strain ATCC BAA-1226 / DSM 17306 / VKM B-2378 / K5).